The sequence spans 782 residues: Endonuclease MutS2 (782 aa).

Residue 336-343 coordinates ATP; that stretch reads GPNTGGKT. A Smr domain is found at 707-782; sequence LDLRGYRYDE…GFGVTVVEIK (76 aa).

The protein belongs to the DNA mismatch repair MutS family. MutS2 subfamily. In terms of assembly, homodimer. Binds to stalled ribosomes, contacting rRNA.

Functionally, endonuclease that is involved in the suppression of homologous recombination and thus may have a key role in the control of bacterial genetic diversity. In terms of biological role, acts as a ribosome collision sensor, splitting the ribosome into its 2 subunits. Detects stalled/collided 70S ribosomes which it binds and splits by an ATP-hydrolysis driven conformational change. Acts upstream of the ribosome quality control system (RQC), a ribosome-associated complex that mediates the extraction of incompletely synthesized nascent chains from stalled ribosomes and their subsequent degradation. Probably generates substrates for RQC. The chain is Endonuclease MutS2 from Staphylococcus saprophyticus subsp. saprophyticus (strain ATCC 15305 / DSM 20229 / NCIMB 8711 / NCTC 7292 / S-41).